A 400-amino-acid polypeptide reads, in one-letter code: MAP kinase-activated protein kinase 2 (400 aa).

Residues 1 to 43 (MLSNSQGQSPPVPFPAPAPPPQPPTPALPHPPAQPPPPPPQQF) form a disordered region. Residue Ser9 is modified to Phosphoserine. Positions 10–42 (PPVPFPAPAPPPQPPTPALPHPPAQPPPPPPQQ) are enriched in pro residues. A Phosphothreonine modification is found at Thr25. The region spanning 64 to 325 (KVTSQVLGLG…ITEFMNHPWI (262 aa)) is the Protein kinase domain. ATP contacts are provided by residues 70-78 (LGLGINGKV) and Lys93. 139-141 (ECL) is a staurosporine binding site. Asp186 functions as the Proton acceptor in the catalytic mechanism. A Phosphothreonine; by MAPK14 modification is found at Thr222. Residue Ser272 is modified to Phosphoserine; by MAPK14. Ser328 is subject to Phosphoserine; by autocatalysis. The autoinhibitory helix stretch occupies residues 328–364 (STKVPQTPLHTSRVLKEDKERWEDVKEEMTSALATMR). The residue at position 334 (Thr334) is a Phosphothreonine; by MAPK14. Residue Lys353 forms a Glycyl lysine isopeptide (Lys-Gly) (interchain with G-Cter in SUMO) linkage. The Nuclear export signal (NES) motif lies at 356 to 365 (MTSALATMRV). Positions 366-390 (DYEQIKIKKIEDASNPLLLKRRKKA) are p38 MAPK-binding site. Short sequence motifs (bipartite nuclear localization signal) lie at residues 371-374 (KIKK) and 385-389 (KRRKK).

Belongs to the protein kinase superfamily. CAMK Ser/Thr protein kinase family. As to quaternary structure, heterodimer with p38-alpha/MAPK14; this heterodimer forms a stable complex: molecules are positioned 'face to face' so that the ATP-binding sites of both kinases are at the heterodimer interface. Interacts with PHC2. Interacts with HSF1. Sumoylation inhibits the protein kinase activity. Post-translationally, phosphorylated and activated by MAP kinase p38-alpha/MAPK14 at Thr-222, Ser-272 and Thr-334. In terms of tissue distribution, expressed in all tissues examined.

The protein resides in the cytoplasm. It localises to the nucleus. The enzyme catalyses L-seryl-[protein] + ATP = O-phospho-L-seryl-[protein] + ADP + H(+). The catalysed reaction is L-threonyl-[protein] + ATP = O-phospho-L-threonyl-[protein] + ADP + H(+). With respect to regulation, activated following phosphorylation by p38-alpha/MAPK14 following various stresses. Inhibited following sumoylation. Specifically inhibited by pyrrolopyridine inhibitors. Stress-activated serine/threonine-protein kinase involved in cytokine production, endocytosis, reorganization of the cytoskeleton, cell migration, cell cycle control, chromatin remodeling, DNA damage response and transcriptional regulation. Following stress, it is phosphorylated and activated by MAP kinase p38-alpha/MAPK14, leading to phosphorylation of substrates. Phosphorylates serine in the peptide sequence, Hyd-X-R-X(2)-S, where Hyd is a large hydrophobic residue. Phosphorylates ALOX5, CDC25B, CDC25C, CEP131, ELAVL1, HNRNPA0, HSP27/HSPB1, KRT18, KRT20, LIMK1, LSP1, PABPC1, PARN, PDE4A, RCSD1, RPS6KA3, TAB3 and TTP/ZFP36. Phosphorylates HSF1; leading to the interaction with HSP90 proteins and inhibiting HSF1 homotrimerization, DNA-binding and transactivation activities. Mediates phosphorylation of HSP27/HSPB1 in response to stress, leading to the dissociation of HSP27/HSPB1 from large small heat-shock protein (sHsps) oligomers and impairment of their chaperone activities and ability to protect against oxidative stress effectively. Involved in inflammatory response by regulating tumor necrosis factor (TNF) and IL6 production post-transcriptionally: acts by phosphorylating AU-rich elements (AREs)-binding proteins ELAVL1, HNRNPA0, PABPC1 and TTP/ZFP36, leading to the regulation of the stability and translation of TNF and IL6 mRNAs. Phosphorylation of TTP/ZFP36, a major post-transcriptional regulator of TNF, promotes its binding to 14-3-3 proteins and reduces its ARE mRNA affinity, leading to inhibition of dependent degradation of ARE-containing transcripts. Phosphorylates CEP131 in response to cellular stress induced by ultraviolet irradiation which promotes binding of CEP131 to 14-3-3 proteins and inhibits formation of novel centriolar satellites. Also involved in late G2/M checkpoint following DNA damage through a process of post-transcriptional mRNA stabilization: following DNA damage, relocalizes from nucleus to cytoplasm and phosphorylates HNRNPA0 and PARN, leading to stabilization of GADD45A mRNA. Involved in toll-like receptor signaling pathway (TLR) in dendritic cells: required for acute TLR-induced macropinocytosis by phosphorylating and activating RPS6KA3. In Homo sapiens (Human), this protein is MAP kinase-activated protein kinase 2 (MAPKAPK2).